The following is a 136-amino-acid chain: uncharacterized protein (136 aa).

This is an uncharacterized protein from Leptolyngbya boryana (Plectonema boryanum).